The primary structure comprises 309 residues: Large ribosomal subunit protein mL45 (309 aa).

The protein belongs to the mitochondrion-specific ribosomal protein mL45 family. In terms of assembly, component of the mitochondrial ribosome large subunit (39S) which comprises a 16S rRNA and about 50 distinct proteins.

The protein resides in the mitochondrion. Its function is as follows. Component of the mitochondrial large ribosomal subunit (mt-LSU). Within the mitochondrial ribosomes, required to direct the nascent polypeptide toward the tunnel exit and position the exit at a distance from the membrane surface. The polypeptide is Large ribosomal subunit protein mL45 (mrpl45) (Xenopus laevis (African clawed frog)).